A 179-amino-acid chain; its full sequence is Large ribosomal subunit protein uL5 (179 aa).

Lysine 3 carries the N6-acetyllysine modification.

This sequence belongs to the universal ribosomal protein uL5 family. Part of the 50S ribosomal subunit; part of the 5S rRNA/L5/L18/L25 subcomplex. Contacts the 5S rRNA and the P site tRNA. Forms a bridge to the 30S subunit in the 70S ribosome.

In terms of biological role, this is one of the proteins that bind and probably mediate the attachment of the 5S RNA into the large ribosomal subunit, where it forms part of the central protuberance. In the 70S ribosome it contacts protein S13 of the 30S subunit (bridge B1b), connecting the 2 subunits; this bridge is implicated in subunit movement. Contacts the P site tRNA; the 5S rRNA and some of its associated proteins might help stabilize positioning of ribosome-bound tRNAs. The chain is Large ribosomal subunit protein uL5 from Shigella flexneri.